Here is a 1141-residue protein sequence, read N- to C-terminus: LRR receptor-like serine/threonine-protein kinase RGI1 (1141 aa).

The N-terminal stretch at 1-33 is a signal peptide; it reads MSLHSLIFFSSSSSSLLFSFFFIFIFCFSLSDA. Topologically, residues 34-726 are extracellular; sequence EQNPEASILY…DASRTRKLRL (693 aa). C69 and C77 are disulfide-bonded. N71 is a glycosylation site (N-linked (GlcNAc...) asparagine). LRR repeat units follow at residues 80–104, 105–128, 130–152, 153–176, 178–200, 202–225, 226–249, 250–273, 275–297, 298–321, 322–345, 347–369, 370–392, 394–417, 418–441, 443–464, 465–489, 490–513, 514–537, 538–561, 563–585, 586–609, 610–634, 636–657, and 658–682; these read QGFI…LPAF, RSLQ…LGDC, GLKV…LSKL, RNLE…ISKC, KLKS…LGKL, GLEV…IGDC, SNLT…LGKL, KKLE…LGNC, ELVD…IGQL, TKLE…IGNC, SNLK…IGRL, FLEE…ISNC, SSLV…ELGT, TKLT…LADC, TDLQ…LFML, NLTK…EIGN, CSSL…IGSL, KKIN…IGSC, SELQ…VSSL, SGLQ…LGRL, SLNK…LGMC, SGLQ…LGDI, ENLE…IASL, KLSI…LANI, and ENLV…LFRQ. N116 is a glycosylation site (N-linked (GlcNAc...) asparagine). 2 consecutive short sequence motifs (small peptide recognition) follow at residues 185-186 and 207-210; these read FD and RIGG. Residue N227 is glycosylated (N-linked (GlcNAc...) asparagine). 2 consecutive short sequence motifs (small peptide recognition) follow at residues 230–235 and Y258; that span reads VLGLAE. The N-linked (GlcNAc...) asparagine glycan is linked to N272. Residues 280–282 carry the Small peptide recognition motif; that stretch reads FLY. N320 carries N-linked (GlcNAc...) asparagine glycosylation. Short sequence motifs (small peptide recognition) lie at residues 328–331 and 350–352; these read DLSL and EFM. A glycan (N-linked (GlcNAc...) asparagine) is linked at N368. 2 consecutive short sequence motifs (small peptide recognition) follow at residues 398-402 and 424-427; these read LFFAW and DLSR. N-linked (GlcNAc...) asparagine glycosylation is present at N443. A Small peptide recognition motif is present at residues 446 to 450; sequence KLLLI. Residue N464 is glycosylated (N-linked (GlcNAc...) asparagine). The Small peptide recognition motif lies at 470–472; sequence RLR. The N-linked (GlcNAc...) asparagine glycan is linked to N523. N617 carries N-linked (GlcNAc...) asparagine glycosylation. N664 carries N-linked (GlcNAc...) asparagine glycosylation. A helical transmembrane segment spans residues 727–747; the sequence is TLALLITLTVVLMILGAVAVI. Topologically, residues 748–1141 are cytoplasmic; it reads RARRNIDNER…LLYSSSSSIE (394 aa). The Protein kinase domain maps to 786–1074; it reads LVEPNVIGKG…EIKQEREEYA (289 aa). ATP is bound by residues 792–800 and K814; that span reads IGKGCSGVV. Phosphotyrosine occurs at positions 868 and 906. The active-site Proton acceptor is D919. Y962 and Y969 each carry phosphotyrosine.

The protein belongs to the protein kinase superfamily. Ser/Thr protein kinase family. As to quaternary structure, interacts with beet curly top virus AL4/C4. Binds to RGF peptides such as RGF1, GLV5/CLEL1/RGF2, GLV7/CLEL3/RGF3, GLV3/RGF4, GLV10/CLEL7/RGF5 and RGF10/CLELN; these interactions trigger the formation of heterodimers with SERK1, SERK2 or BAK1/SERK3 via LRR regions. Interacts with UBP13. Post-translationally, phosphorylated and ubiquitinated upon interaction with RGF1, thus leading to activation a subsequent degradation. Stabilized by UBP12 and UBP13-mediated deubiquitination. In terms of processing, autophosphorylated. As to expression, expressed in roots.

It localises to the cell membrane. It catalyses the reaction L-seryl-[protein] + ATP = O-phospho-L-seryl-[protein] + ADP + H(+). The catalysed reaction is L-threonyl-[protein] + ATP = O-phospho-L-threonyl-[protein] + ADP + H(+). In terms of biological role, together with RGI2, RGI3, RGI4 and RGI5, acts as a receptor of RGF peptides (e.g. RGF1, GLV5/CLEL1/RGF2, GLV7/CLEL3/RGF3, GLV3/RGF4, GLV10/CLEL7/RGF5 and RGF10/CLELN), peptide hormones which maintain the postembryonic root stem cell niche by regulating the expression levels and patterns of the transcription factor PLETHORA (PLT, e.g. PLT1 and PLT2). Links RGF peptides signal with their downstream components. The polypeptide is LRR receptor-like serine/threonine-protein kinase RGI1 (Arabidopsis thaliana (Mouse-ear cress)).